A 152-amino-acid chain; its full sequence is Ubiquitin-conjugating enzyme E2 A (152 aa).

The 147-residue stretch at 4-150 (PARRRLMRDF…VSAIVEQSWR (147 aa)) folds into the UBC core domain. Cys-88 acts as the Glycyl thioester intermediate in catalysis. Ser-120 is subject to Phosphoserine; by CDK9.

This sequence belongs to the ubiquitin-conjugating enzyme family. As to quaternary structure, interacts with RAD18 and WAC. Interacts with RFPL4A and CCNB1. Phosphorylation at Ser-120 by CDK9 increases activity towards histone H2B.

Its subcellular location is the late endosome. The protein resides in the lysosome. It carries out the reaction S-ubiquitinyl-[E1 ubiquitin-activating enzyme]-L-cysteine + [E2 ubiquitin-conjugating enzyme]-L-cysteine = [E1 ubiquitin-activating enzyme]-L-cysteine + S-ubiquitinyl-[E2 ubiquitin-conjugating enzyme]-L-cysteine.. Its pathway is protein modification; protein ubiquitination. In terms of biological role, E2 ubiquitin-conjugating enzyme that accepts ubiquitin from the ubiquitin-activating enzyme E1 and transfers it to a E3 ubiquitin-protein ligase. In vitro catalyzes 'Lys-11', as well as 'Lys-48'-linked polyubiquitination. Together with the E3 enzyme BRE1 (RNF20 and/or RNF40), plays a role in transcription regulation by catalyzing the monoubiquitination of histone H2B at 'Lys-120' to form H2BK120ub1. H2BK120ub1 gives a specific tag for epigenetic transcriptional activation, elongation by RNA polymerase II, telomeric silencing, and is also a prerequisite for H3K4me and H3K79me formation. Involved in mitophagy by acting as a E2 ubiquitin-conjugating enzyme for PRKN. In association with the E3 enzyme UBR4, is involved in N-end rule-dependent protein degradation. In association with the E3 ubiquitin-protein ligase complex SIFI, inhibits the mitochondrial stress response by acting as a E2 ubiquitin-conjugating enzyme for UBR4 and KCMF1. This chain is Ubiquitin-conjugating enzyme E2 A, found in Homo sapiens (Human).